A 311-amino-acid chain; its full sequence is tRNA-cytidine(32) 2-sulfurtransferase (311 aa).

The short motif at 47-52 (SGGKDS) is the PP-loop motif element. The [4Fe-4S] cluster site is built by Cys122, Cys125, and Cys213.

Belongs to the TtcA family. In terms of assembly, homodimer. Requires Mg(2+) as cofactor. The cofactor is [4Fe-4S] cluster.

It is found in the cytoplasm. The enzyme catalyses cytidine(32) in tRNA + S-sulfanyl-L-cysteinyl-[cysteine desulfurase] + AH2 + ATP = 2-thiocytidine(32) in tRNA + L-cysteinyl-[cysteine desulfurase] + A + AMP + diphosphate + H(+). The protein operates within tRNA modification. In terms of biological role, catalyzes the ATP-dependent 2-thiolation of cytidine in position 32 of tRNA, to form 2-thiocytidine (s(2)C32). The sulfur atoms are provided by the cysteine/cysteine desulfurase (IscS) system. This Salmonella typhi protein is tRNA-cytidine(32) 2-sulfurtransferase.